The primary structure comprises 546 residues: Adenine DNA glycosylase (546 aa).

The interval 19–51 (RAAVGSGHRKQAASQEGRQKHAKNNSQAKPSAC) is disordered. Glu131 functions as the Proton donor/acceptor in the catalytic mechanism. [4Fe-4S] cluster contacts are provided by Cys287, Cys294, Cys297, and Cys303. The Nudix hydrolase domain occupies 364–495 (PREESSATCV…AMKKVFRVYQ (132 aa)). Residues 404 to 426 (VTWEPSEQLQRKALLQELQRWAG) carry the Nudix box motif.

Belongs to the Nth/MutY family. The cofactor is [4Fe-4S] cluster.

The protein resides in the nucleus. The protein localises to the mitochondrion. The enzyme catalyses Hydrolyzes free adenine bases from 7,8-dihydro-8-oxoguanine:adenine mismatched double-stranded DNA, leaving an apurinic site.. In terms of biological role, involved in oxidative DNA damage repair. Initiates repair of A*oxoG to C*G by removing the inappropriately paired adenine base from the DNA backbone. Possesses both adenine and 2-OH-A DNA glycosylase activities. In Homo sapiens (Human), this protein is Adenine DNA glycosylase (MUTYH).